The chain runs to 274 residues: Glutamate racemase (274 aa).

Residues 9-10 (DS) and 41-42 (YG) each bind substrate. Residue C73 is the Proton donor/acceptor of the active site. 74-75 (NT) lines the substrate pocket. The Proton donor/acceptor role is filled by C183. Position 184–185 (184–185 (TH)) interacts with substrate.

It belongs to the aspartate/glutamate racemases family.

The catalysed reaction is L-glutamate = D-glutamate. Its pathway is cell wall biogenesis; peptidoglycan biosynthesis. Its function is as follows. Provides the (R)-glutamate required for cell wall biosynthesis. In Shewanella baltica (strain OS223), this protein is Glutamate racemase.